The primary structure comprises 217 residues: Probable transaldolase (217 aa).

Catalysis depends on Lys83, which acts as the Schiff-base intermediate with substrate.

The protein belongs to the transaldolase family. Type 3B subfamily.

The protein resides in the cytoplasm. It catalyses the reaction D-sedoheptulose 7-phosphate + D-glyceraldehyde 3-phosphate = D-erythrose 4-phosphate + beta-D-fructose 6-phosphate. Its pathway is carbohydrate degradation; pentose phosphate pathway; D-glyceraldehyde 3-phosphate and beta-D-fructose 6-phosphate from D-ribose 5-phosphate and D-xylulose 5-phosphate (non-oxidative stage): step 2/3. Transaldolase is important for the balance of metabolites in the pentose-phosphate pathway. The sequence is that of Probable transaldolase from Anaeromyxobacter sp. (strain K).